The sequence spans 237 residues: uncharacterized protein (237 aa).

The DPCK domain occupies 13-218 (VVGLSGGVAT…KSWKPYIFRV (206 aa)). ATP is bound at residue 18–25 (GGVATGKS).

It belongs to the CoaE family.

This is an uncharacterized protein from Caenorhabditis elegans.